The primary structure comprises 407 residues: MELLEEDLTCPICCSLFDDPRVLPCSHNFCKKCLEGILEGSVRNSLWRPAPFKCPTCRKETSATGINSLQVNYSLKGIVEKYNKIKISPKMPVCKGHLGQPLNIFCLTDMQLICGICATRGEHTKHVFCSIEDAYAQERDAFESLFQSFETWRRGDALSRLDTLETSKRKSLQLLTKDSDKVKEFFEKLQHTLDQKKNEILSDFETMKLAVMQAYDPEINKLNTILQEQRMAFNIAEAFKDVSEPIVFLQQMQEFREKIKVIKETPLPPSNLPASPLMKNFDTSQWEDIKLVDVDKLSLPQDTGTFISKIPWSFYKLFLLILLLGLVIVFGPTMFLEWSLFDDLATWKGCLSNFSSYLTKTADFIEQSVFYWEQVTDGFFIFNERFKNFTLVVLNNVAEFVCKYKLL.

The RING-type zinc finger occupies 10-58; that stretch reads CPICCSLFDDPRVLPCSHNFCKKCLEGILEGSVRNSLWRPAPFKCPTCR. Residues 89-131 form a B box-type zinc finger; it reads PKMPVCKGHLGQPLNIFCLTDMQLICGICATRGEHTKHVFCSI. Residues cysteine 94, histidine 97, cysteine 117, and histidine 123 each contribute to the Zn(2+) site. The stretch at 172–200 forms a coiled coil; it reads LQLLTKDSDKVKEFFEKLQHTLDQKKNEI. Residues 317 to 337 traverse the membrane as a helical segment; sequence LFLLILLLGLVIVFGPTMFLE.

Belongs to the TRIM/RBCC family. As to quaternary structure, interacts (via C-terminal domain) with VCP. Interacts with AKT1; the interaction ubiquitinates AKT1 and leads to its proteasomal degradation. Interacts with MDM2; the interaction ubiquitinates AKT1 and leads to its proteasomal degradation. Interacts with p62/SQSTM1. Interacts with TRAF6. Interacts with IKBKG/NEMO. Post-translationally, auto-ubiquitinated; requires the RING-type zinc finger. Auto-polyubiquitination leads to proteasomal degradation.

It is found in the endoplasmic reticulum membrane. The catalysed reaction is S-ubiquitinyl-[E2 ubiquitin-conjugating enzyme]-L-cysteine + [acceptor protein]-L-lysine = [E2 ubiquitin-conjugating enzyme]-L-cysteine + N(6)-ubiquitinyl-[acceptor protein]-L-lysine.. It participates in protein modification; protein ubiquitination. Its function is as follows. Endoplasmic reticulum (ER) membrane anchored E3 ligase involved in the retrotranslocation and turnover of membrane and secretory proteins from the ER through a set of processes named ER-associated degradation (ERAD). This process acts on misfolded proteins as well as in the regulated degradation of correctly folded proteins. Enhances ionizing radiation-induced p53/TP53 stability and apoptosis via ubiquitinating MDM2 and AKT1 and decreasing AKT1 kinase activity through MDM2 and AKT1 proteasomal degradation. Regulates ER stress-induced autophagy, and may act as a tumor suppressor. Also plays a role in innate immune response by stimulating NF-kappa-B activity in the TLR2 signaling pathway. Ubiquitinates TRAF6 via the 'Lys-29'-linked polyubiquitination chain resulting in NF-kappa-B activation. Participates as well in T-cell receptor-mediated NF-kappa-B activation. In the presence of TNF, modulates the IKK complex by regulating IKBKG/NEMO ubiquitination leading to the repression of NF-kappa-B. The sequence is that of E3 ubiquitin-protein ligase TRIM13 (TRIM13) from Homo sapiens (Human).